We begin with the raw amino-acid sequence, 497 residues long: MVLAQLGGSISRALAQMSNATVIDEKVLGECLNEISRALLQSDVQFKMVRDMQTNIRKIVNLETLAAGTNKRRIIQQAVFTELCNMLDPGKPAFTTKKGKPSVVMFVGLQGSGKTTTCTKYAYYHQRKGFKPSLVCADTFRAGAFDQLKQNATKAKIPFYGSYMESDPVKIAVEGLERFRKENSDLIIIDTSGRHKQEAALFEEMRQVAEATKPDLVIFVMDGSIGQAAFDQAQAFKQSASVGAVIITKLDGHAKGGGALSAVAATKSPVIFIGTGEHIDEFEIFDVKPFVSRLLGMGDLSGLMDKIQDVMPADQQPELLAKLAEGTFTLRLLYEQFQNLLKMGPIGQVFSMLPGFSSELMPKGHEKEGQAKIKRYMTIMDSMTAAELDSTNPKLMTESRIIRIARGSGRQIRDVTDMLEEYKRLAKMWSKMKGLKMPKNGKMSDLSQNLNIQQMTKALPPQVLKQMGGMGGLQALMKQMGGKDMSKMLGGMGLGGD.

Residues 1-295 form a G-domain region; it reads MVLAQLGGSI…DVKPFVSRLL (295 aa). GTP-binding positions include 108 to 115, 190 to 194, and 248 to 251; these read GLQGSGKT, DTSGR, and TKLD. The tract at residues 296–497 is M-domain; the sequence is GMGDLSGLMD…MLGGMGLGGD (202 aa).

This sequence belongs to the GTP-binding SRP family. SRP54 subfamily. As to quaternary structure, component of a signal recognition particle (SRP) complex that consists of a 7SL RNA molecule of 300 nucleotides and six protein subunits: SRP72, SRP68, SRP54, SRP19, SRP14 and SRP9.

It localises to the cytoplasm. It is found in the endoplasmic reticulum. The enzyme catalyses GTP + H2O = GDP + phosphate + H(+). In terms of biological role, component of the signal recognition particle (SRP) complex, a ribonucleoprotein complex that mediates the cotranslational targeting of secretory and membrane proteins to the endoplasmic reticulum (ER). As part of the SRP complex, associates with the SRP receptor (SR) component SRPRA to target secretory proteins to the endoplasmic reticulum membrane. Binds to the signal sequence of presecretory proteins when they emerge from the ribosomes. Displays basal GTPase activity, and stimulates reciprocal GTPase activation of the SR subunit SRPRA. Forms a guanosine 5'-triphosphate (GTP)-dependent complex with the SR subunit SRPRA. SR compaction and GTPase mediated rearrangement of SR drive SRP-mediated cotranslational protein translocation into the ER. Requires the presence of SRP9/SRP14 and/or SRP19 to stably interact with RNA. The sequence is that of Signal recognition particle subunit SRP54 1 (SRP54-1) from Hordeum vulgare (Barley).